We begin with the raw amino-acid sequence, 197 residues long: CASP-like protein 1B1 (197 aa).

N-acetylalanine is present on Ala2. The Cytoplasmic segment spans residues 2–17 (AVSKLTLAATSGKSCK). Residues 18–38 (ILLGLRLLAFSATLSAAIVMG) traverse the membrane as a helical segment. The Extracellular portion of the chain corresponds to 39-69 (LNKETKTFIVGKVGNTPIQATFTAKFDHTPA). A helical membrane pass occupies residues 70-90 (FVFFVVANAMVSFHNLLMIAL). Residues 91 to 106 (QIFGGKMEFTGFRLLS) lie on the Cytoplasmic side of the membrane. The helical transmembrane segment at 107 to 127 (VAILDMLNVTLISAAANAAAF) threads the bilayer. Over 128-156 (MAEVGKNGNKHARWDKICDRFATYCDHGA) the chain is Extracellular. A helical membrane pass occupies residues 157–177 (GALIAAFAGVILMLIISAASI). The Cytoplasmic segment spans residues 178–197 (SRLVQPNKCCSTTASPSVVP).

It belongs to the Casparian strip membrane proteins (CASP) family. Homodimer and heterodimers.

It is found in the cell membrane. This chain is CASP-like protein 1B1, found in Arabidopsis thaliana (Mouse-ear cress).